The chain runs to 62 residues: MDPRECVCMSGGICMCGDNCKCTTCNCKTYWKSCCPCCPPGCAKCARGCICKGGSDKCSCCP.

C6, C8, C14, C16, C20, C22, C25, C27, C34, C35, C37, C38, C42, C45, C49, C51, C58, C60, and C61 together coordinate a divalent metal cation.

Belongs to the metallothionein superfamily. Type 1 family.

Functionally, seems to bind zinc and copper. Could play a special role in regulating zinc metabolism during the differentiation of stratified epithelia. This chain is Metallothionein-4 (MT4), found in Homo sapiens (Human).